The following is a 283-amino-acid chain: 5'-nucleotidase SurE (283 aa).

A divalent metal cation is bound by residues Asp-14, Asp-15, Ser-47, and Asn-105.

It belongs to the SurE nucleotidase family. A divalent metal cation serves as cofactor.

It localises to the cytoplasm. It carries out the reaction a ribonucleoside 5'-phosphate + H2O = a ribonucleoside + phosphate. Functionally, nucleotidase that shows phosphatase activity on nucleoside 5'-monophosphates. The polypeptide is 5'-nucleotidase SurE (Chlamydia trachomatis serovar A (strain ATCC VR-571B / DSM 19440 / HAR-13)).